The primary structure comprises 426 residues: Histidinol dehydrogenase (426 aa).

NAD(+) is bound by residues Y123, Q185, and N208. Residues S231, Q253, and H256 each coordinate substrate. Residues Q253 and H256 each coordinate Zn(2+). Catalysis depends on proton acceptor residues E321 and H322. H322, D355, E409, and H414 together coordinate substrate. Residue D355 participates in Zn(2+) binding. H414 is a binding site for Zn(2+).

The protein belongs to the histidinol dehydrogenase family. Zn(2+) is required as a cofactor.

It carries out the reaction L-histidinol + 2 NAD(+) + H2O = L-histidine + 2 NADH + 3 H(+). It participates in amino-acid biosynthesis; L-histidine biosynthesis; L-histidine from 5-phospho-alpha-D-ribose 1-diphosphate: step 9/9. Its function is as follows. Catalyzes the sequential NAD-dependent oxidations of L-histidinol to L-histidinaldehyde and then to L-histidine. The sequence is that of Histidinol dehydrogenase from Bacillus licheniformis (strain ATCC 14580 / DSM 13 / JCM 2505 / CCUG 7422 / NBRC 12200 / NCIMB 9375 / NCTC 10341 / NRRL NRS-1264 / Gibson 46).